A 467-amino-acid chain; its full sequence is Tripartite motif-containing protein 75 (467 aa).

Residues C16–R57 form an RING-type zinc finger. The B box-type zinc-finger motif lies at E90 to I131. Zn(2+)-binding residues include C95, H98, C117, and H123. A coiled-coil region spans residues V168 to E222. Positions Y276–E466 constitute a B30.2/SPRY domain.

The protein belongs to the TRIM/RBCC family.

It localises to the cytoplasm. The protein localises to the cytoskeleton. Its subcellular location is the spindle. Functionally, may play a role in female meiosis. The chain is Tripartite motif-containing protein 75 from Mus musculus (Mouse).